The primary structure comprises 374 residues: Peptide chain release factor 2 (374 aa).

Residue Gln-252 is modified to N5-methylglutamine.

This sequence belongs to the prokaryotic/mitochondrial release factor family. Post-translationally, methylated by PrmC. Methylation increases the termination efficiency of RF2.

The protein resides in the cytoplasm. Its function is as follows. Peptide chain release factor 2 directs the termination of translation in response to the peptide chain termination codons UGA and UAA. This is Peptide chain release factor 2 from Stenotrophomonas maltophilia (strain R551-3).